We begin with the raw amino-acid sequence, 261 residues long: SURF1-like protein (261 aa).

2 helical membrane-spanning segments follow: residues 17 to 37 and 223 to 243; these read LYWA…WQIF and LSYI…WVFL.

It belongs to the SURF1 family.

The protein resides in the mitochondrion inner membrane. In terms of biological role, probably involved in the biogenesis of the COX complex. In Monosiga brevicollis (Choanoflagellate), this protein is SURF1-like protein.